Reading from the N-terminus, the 60-residue chain is MSELFSNDNIFLNVNVNSQNEAIEKAGKALVDSGAVTDAYIQVVSTFMGNGLAIPHGTDD.

Positions 2 to 60 (SELFSNDNIFLNVNVNSQNEAIEKAGKALVDSGAVTDAYIQVVSTFMGNGLAIPHGTDD) constitute a PTS EIIA type-2 domain. Residue H56 is the Tele-phosphohistidine intermediate of the active site. H56 carries the phosphohistidine; by HPr modification.

In terms of assembly, homodimer or homotrimer. Seems to be a monomer when not phosphorylated.

The protein resides in the cytoplasm. In terms of biological role, the phosphoenolpyruvate-dependent sugar phosphotransferase system (sugar PTS), a major carbohydrate active transport system, catalyzes the phosphorylation of incoming sugar substrates concomitantly with their translocation across the cell membrane. The enzyme II CmtAB PTS system is involved in D-mannitol transport. The protein is Mannitol-specific phosphotransferase enzyme IIA component of Staphylococcus aureus.